A 108-amino-acid chain; its full sequence is Small ribosomal subunit protein bS6 (108 aa).

The protein belongs to the bacterial ribosomal protein bS6 family.

Its function is as follows. Binds together with bS18 to 16S ribosomal RNA. The chain is Small ribosomal subunit protein bS6 from Nostoc sp. (strain PCC 7120 / SAG 25.82 / UTEX 2576).